The following is a 70-amino-acid chain: DNA-directed RNA polymerase subunit omega (70 aa).

This sequence belongs to the RNA polymerase subunit omega family. In terms of assembly, the RNAP catalytic core consists of 2 alpha, 1 beta, 1 beta' and 1 omega subunit. When a sigma factor is associated with the core the holoenzyme is formed, which can initiate transcription.

It carries out the reaction RNA(n) + a ribonucleoside 5'-triphosphate = RNA(n+1) + diphosphate. Its function is as follows. Promotes RNA polymerase assembly. Latches the N- and C-terminal regions of the beta' subunit thereby facilitating its interaction with the beta and alpha subunits. The sequence is that of DNA-directed RNA polymerase subunit omega from Pelobacter propionicus (strain DSM 2379 / NBRC 103807 / OttBd1).